The primary structure comprises 307 residues: MNHATSELHDESAVTSIPETTRLQDLKALVKMGIVNSNTLTVFTGFWLALHFNGLSVLDNLDKLFFTIVGSGLVMAGVCCLNNYIDRDIDPLMERTKTRPTVTGKYKPGFALTFGLVILLLGFVFLLLTTPMAVLMGFIGAFTYVVLYSLWTKRKYTLNTVVGSISGAVPPLIGWAAIDPSLGHPIAWMLFLIMFIWQIPHFLALAMKRVDEYRNAGIPMLPVVHGFEITKRQIMIWTVCLLPLPFYMSGLGITFMVIATLLNIGWIVLGFYGFRKKDDIKWSVQMFVYSLNYLTILFVSMIVVTFF.

A run of 8 helical transmembrane segments spans residues 38–58, 65–85, 108–128, 131–151, 158–178, 186–206, 251–271, and 287–307; these read NTLT…LSVL, FFTI…NNYI, PGFA…FLLL, PMAV…YSLW, LNTV…WAAI, IAWM…LALA, LGIT…VLGF, and FVYS…VTFF.

Belongs to the UbiA prenyltransferase family. Protoheme IX farnesyltransferase subfamily. Interacts with CtaA.

The protein resides in the cell membrane. It catalyses the reaction heme b + (2E,6E)-farnesyl diphosphate + H2O = Fe(II)-heme o + diphosphate. It participates in porphyrin-containing compound metabolism; heme O biosynthesis; heme O from protoheme: step 1/1. Converts heme B (protoheme IX) to heme O by substitution of the vinyl group on carbon 2 of heme B porphyrin ring with a hydroxyethyl farnesyl side group. This chain is Protoheme IX farnesyltransferase, found in Bacillus thuringiensis (strain Al Hakam).